Reading from the N-terminus, the 152-residue chain is Ribosome maturation factor RimP (152 aa).

It belongs to the RimP family.

It localises to the cytoplasm. Its function is as follows. Required for maturation of 30S ribosomal subunits. This Elusimicrobium minutum (strain Pei191) protein is Ribosome maturation factor RimP.